Consider the following 123-residue polypeptide: Large ribosomal subunit protein bL21 (123 aa).

The protein belongs to the bacterial ribosomal protein bL21 family. As to quaternary structure, part of the 50S ribosomal subunit. Contacts protein L20.

This protein binds to 23S rRNA in the presence of protein L20. This chain is Large ribosomal subunit protein bL21, found in Rippkaea orientalis (strain PCC 8801 / RF-1) (Cyanothece sp. (strain PCC 8801)).